Reading from the N-terminus, the 531-residue chain is 5-(hydroxymethyl)furfural oxidase (531 aa).

FAD is bound by residues 15–16, 36–37, W68, L94, G98, 102–105, V233, and W466; these read TA, EA, and NMVV. H467 functions as the Proton acceptor in the catalytic mechanism. FAD contacts are provided by residues A501 and 512-513; that span reads TN.

Belongs to the GMC oxidoreductase family. As to quaternary structure, monomer. FAD is required as a cofactor.

It carries out the reaction 5-hydroxymethylfurfural + 3 O2 + 2 H2O = 2,5-dicarboxyfuran + 3 H2O2 + 2 H(+). The catalysed reaction is benzylthiol + O2 = benzothialdehyde + H2O2. In terms of biological role, involved in the degradation and detoxification of 5-(hydroxymethyl)furfural (HMF) by mediating its oxidation to furan-2,5-dicarboxylate (FDCA), a biobased platform chemical for the production of polymers. Active with a wide range of aromatic and aliphatic primary alcohols and aldehydes: acts on alcohol groups and requires the spontaneous hydration of aldehyde groups for their oxidation. To a lesser extent, is also able to catalyze the oxidation of thiols that are structurally similar to its alcohol substrates, yielding the corresponding thiocarbonyls. This Methylovorus sp. (strain MP688) protein is 5-(hydroxymethyl)furfural oxidase.